Consider the following 246-residue polypeptide: Proteasome subunit alpha (246 aa).

Belongs to the peptidase T1A family. In terms of assembly, the 20S proteasome core is composed of 14 alpha and 14 beta subunits that assemble into four stacked heptameric rings, resulting in a barrel-shaped structure. The two inner rings, each composed of seven catalytic beta subunits, are sandwiched by two outer rings, each composed of seven alpha subunits. The catalytic chamber with the active sites is on the inside of the barrel. Has probably a gated structure, the ends of the cylinder being occluded by the N-termini of the alpha-subunits. Is likely capped at one or both ends by the proteasome regulatory ATPase, PAN.

It is found in the cytoplasm. Its activity is regulated as follows. The formation of the proteasomal ATPase PAN-20S proteasome complex, via the docking of the C-termini of PAN into the intersubunit pockets in the alpha-rings, triggers opening of the gate for substrate entry. Interconversion between the open-gate and close-gate conformations leads to a dynamic regulation of the 20S proteasome proteolysis activity. In terms of biological role, component of the proteasome core, a large protease complex with broad specificity involved in protein degradation. This Archaeoglobus fulgidus (strain ATCC 49558 / DSM 4304 / JCM 9628 / NBRC 100126 / VC-16) protein is Proteasome subunit alpha.